Reading from the N-terminus, the 565-residue chain is Membrane protein insertase YidC (565 aa).

The next 6 helical transmembrane spans lie at 6-26 (VLLI…WGKN), 348-368 (LMAL…SLLH), 370-390 (WGWA…PLSA), 437-457 (GGCF…WVLV), 479-499 (PYFI…KLTP), and 516-536 (PLIF…YWVI).

Belongs to the OXA1/ALB3/YidC family. Type 1 subfamily. As to quaternary structure, interacts with the Sec translocase complex via SecD. Specifically interacts with transmembrane segments of nascent integral membrane proteins during membrane integration.

The protein localises to the cell inner membrane. Its function is as follows. Required for the insertion and/or proper folding and/or complex formation of integral membrane proteins into the membrane. Involved in integration of membrane proteins that insert both dependently and independently of the Sec translocase complex, as well as at least some lipoproteins. Aids folding of multispanning membrane proteins. This chain is Membrane protein insertase YidC, found in Xylella fastidiosa (strain M12).